Consider the following 377-residue polypeptide: Opsin, blue-sensitive (377 aa).

Residues 1-56 lie on the Extracellular side of the membrane; sequence MLLHNKTLAGKALAFIAEEGYVPSMREKFLGWNVPPEYSDLVHPHWRAFPAPGKHF. An N-linked (GlcNAc...) asparagine glycan is attached at N5. Residues 57–81 traverse the membrane as a helical segment; sequence HIGLAIIYSMLLIMSLVGNCCVIWI. Residues 82–93 lie on the Cytoplasmic side of the membrane; it reads FSTSKSLRTPSN. A helical membrane pass occupies residues 94 to 119; it reads MFIVSLAIFDIIMAFEMPMLVISSFM. Over 120 to 132 the chain is Extracellular; it reads ERMIGWEIGCDVY. A disulfide bridge connects residues C129 and C206. The helical transmembrane segment at 133–152 threads the bilayer; it reads SVFGSISGMGQAMTNAAIAF. Residues 153–170 are Cytoplasmic-facing; the sequence is DRYRTISCPIDGRLNSKQ. A helical transmembrane segment spans residues 171–195; sequence AAVIIAFTWFWVTPFTVLPLLKVWG. At 196–219 the chain is on the extracellular side; the sequence is RYTTEGFLTTCSFDFLTDDEDTKV. The helical transmembrane segment at 220–247 threads the bilayer; the sequence is FVTCIFIWAYVIPLIFIILFYSRLLSSI. Residues 248 to 282 are Cytoplasmic-facing; sequence RNHEKMLREQAKKMNVKSLVSNQDKERSAEVRIAK. The helical transmembrane segment at 283-306 threads the bilayer; sequence VAFTIFFLFLLAWTPYATVALIGV. Over 307–314 the chain is Extracellular; it reads YGNRELLT. A helical transmembrane segment spans residues 315 to 339; sequence PVSTMLPAVFAKTVSCIDPWIYAIN. At K326 the chain carries N6-(retinylidene)lysine. At 340–377 the chain is on the cytoplasmic side; the sequence is HPRYRQELQKRCKWMGIHEPETTSDATSAQTEKIKTDE.

It belongs to the G-protein coupled receptor 1 family. Opsin subfamily. Post-translationally, phosphorylated on some or all of the serine and threonine residues present in the C-terminal region. As to expression, expressed in the dorsal region of the retina and sparsely expressed in the ventral region.

The protein resides in the membrane. Visual pigments are the light-absorbing molecules that mediate vision. They consist of an apoprotein, opsin, covalently linked to 11-cis-retinal. The polypeptide is Opsin, blue-sensitive (BLOP) (Apis mellifera (Honeybee)).